Reading from the N-terminus, the 352-residue chain is Molybdenum import ATP-binding protein ModC (352 aa).

The 229-residue stretch at 1-229 (MLELNFSQTL…SVMNPWLPKE (229 aa)) folds into the ABC transporter domain. 31-38 (GVSGAGKT) serves as a coordination point for ATP. In terms of domain architecture, Mop spans 289-352 (QTSIRNVLRA…AQIKSVSITA (64 aa)).

The protein belongs to the ABC transporter superfamily. Molybdate importer (TC 3.A.1.8) family. In terms of assembly, the complex is composed of two ATP-binding proteins (ModC), two transmembrane proteins (ModB) and a solute-binding protein (ModA).

The protein resides in the cell inner membrane. The catalysed reaction is molybdate(out) + ATP + H2O = molybdate(in) + ADP + phosphate + H(+). In terms of biological role, part of the ABC transporter complex ModABC involved in molybdenum import. Responsible for energy coupling to the transport system. In Escherichia coli (strain K12), this protein is Molybdenum import ATP-binding protein ModC.